Consider the following 571-residue polypeptide: S100P-binding protein (571 aa).

Positions 270 to 280 (SDIPFDGDIDE) are enriched in acidic residues. 2 disordered regions span residues 270 to 312 (SDIP…LESV) and 356 to 385 (NGQN…CSQS). The segment covering 299–309 (TSESTPASSEL) has biased composition (polar residues). The segment covering 365 to 378 (PLPPSDTAPGPQLP) has biased composition (pro residues).

Its subcellular location is the nucleus. This chain is S100P-binding protein (s100pbp), found in Xenopus tropicalis (Western clawed frog).